A 394-amino-acid polypeptide reads, in one-letter code: Phosphoglycerate kinase (394 aa).

Substrate-binding positions include 21 to 23, R36, 59 to 62, R118, and R151; these read DFN and HLGR. S183 carries the phosphoserine modification. K201 and G292 together coordinate ATP. Position 299 is a phosphothreonine (T299). ATP is bound by residues E323 and 350-353; that span reads GGDS.

The protein belongs to the phosphoglycerate kinase family. Monomer.

Its subcellular location is the cytoplasm. The catalysed reaction is (2R)-3-phosphoglycerate + ATP = (2R)-3-phospho-glyceroyl phosphate + ADP. The protein operates within carbohydrate degradation; glycolysis; pyruvate from D-glyceraldehyde 3-phosphate: step 2/5. The protein is Phosphoglycerate kinase of Bacillus thuringiensis (strain Al Hakam).